The sequence spans 765 residues: Glucosamine inositolphosphorylceramide transferase 1 (765 aa).

Transmembrane regions (helical) follow at residues 43 to 63 (FFAS…WFVF), 394 to 414 (VILG…LGFL), and 476 to 496 (MGKF…CVGV). Substrate contacts are provided by residues N553, 577 to 582 (NSLNNR), 598 to 600 (DDD), R628, and 683 to 687 (FNCED). Residue D600 participates in Mn(2+) binding. An intrachain disulfide couples C685 to C738. D687 is a catalytic residue.

Belongs to the glycosyltransferase 64 family. It depends on Mn(2+) as a cofactor. Specifically and highly expressed in developing embryos and mature seeds. Also detected at low levels in stigma and pollen.

It localises to the membrane. The catalysed reaction is an N-(2R-hydroxy-very-long-chain fatty acyl)-(R)-4-hydroxysphingoid base + a 1,2-diacyl-sn-glycero-3-phospho-(1D-myo-inositol) = a 1D-myo-inositol-1-phospho-N-[(R)-2-hydroxy-very-long-chain fatty acyl]-(R)-4-hydroxysphingoid base + a 1,2-diacyl-sn-glycerol. It participates in sphingolipid metabolism. In terms of biological role, glycosyltransferase that mediates the glycosylation of glycosylinositol phosphorylceramides (GIPCs), the major sphingolipids in the plasma membrane; acts as a HexN(Ac)-specific GIPC sugar transferase and accepts glucosamine (GlcN) and N-acetylglucosamine (GlcNAc) as the sugar unit. Responsible for the glycosylation of a subgroup of GIPCs found in seeds and pollen that contain GlcNAc and GlcN (GlcN(Ac)). Maybe involved in the maintenance of cell-cell adhesion. This Arabidopsis thaliana (Mouse-ear cress) protein is Glucosamine inositolphosphorylceramide transferase 1.